The chain runs to 152 residues: Snaclec agkisacutacin subunit A (152 aa).

The signal sequence occupies residues 1–23; sequence MGRFIFVSFGLLVVFLSLSGTAA. The 129-residue stretch at 24 to 152 folds into the C-type lectin domain; that stretch reads DCSSGWSSYE…EQQDPFVCEA (129 aa). Disulfide bonds link cysteine 25/cysteine 36, cysteine 53/cysteine 150, and cysteine 125/cysteine 142. Residues serine 64, glutamate 66, and glutamate 70 each contribute to the Ca(2+) site. Glutamate 151 is a binding site for Ca(2+).

The protein belongs to the snaclec family. Heterodimer with subunit B of AaACP or agkisacutacin; disulfide-linked. In terms of tissue distribution, expressed by the venom gland.

The protein localises to the secreted. In terms of biological role, anticoagulant protein which binds to the gamma-carboxyglutamic acid-domain regions of factors IX (F9) and factor X (F10) in the presence of calcium with a 1 to 1 stoichiometry. Also inhibits platelet aggregation by binding to platelet glycoprotein Ibalpha (GP1BA) and functioning as a blocker of von Willebrand factor (VWF). Is devoid of hemorrhagic and lethal activities. Possesses antithrombotic and thrombolytic activities. Also hydrolyzes the Aalpha-chain of fibrinogen (FGA). Does not affect the Bbeta-chain (FGB) and the gamma chain (FGG). In Deinagkistrodon acutus (Hundred-pace snake), this protein is Snaclec agkisacutacin subunit A.